Here is a 192-residue protein sequence, read N- to C-terminus: Adenine phosphoribosyltransferase (192 aa).

This sequence belongs to the purine/pyrimidine phosphoribosyltransferase family. As to quaternary structure, homodimer.

It localises to the cytoplasm. The catalysed reaction is AMP + diphosphate = 5-phospho-alpha-D-ribose 1-diphosphate + adenine. It participates in purine metabolism; AMP biosynthesis via salvage pathway; AMP from adenine: step 1/1. In terms of biological role, catalyzes a salvage reaction resulting in the formation of AMP, that is energically less costly than de novo synthesis. The chain is Adenine phosphoribosyltransferase from Corynebacterium efficiens (strain DSM 44549 / YS-314 / AJ 12310 / JCM 11189 / NBRC 100395).